A 75-amino-acid polypeptide reads, in one-letter code: Dermaseptin-A3 (75 aa).

The signal sequence occupies residues 1–22 (MAFLKKSLFLVLLLGLISLSIC). Positions 23–43 (EEEKRENEVEEEQEDDEQSEL) are excised as a propeptide. Glutamine amide is present on glutamine 72. The propeptide occupies 74 to 75 (EQ).

This sequence belongs to the frog skin active peptide (FSAP) family. Dermaseptin subfamily. As to expression, expressed by the skin glands.

The protein resides in the secreted. Functionally, possesses a potent antimicrobial activity against Gram-positive and Gram-negative bacteria. Probably acts by disturbing membrane functions with its amphipathic structure. The protein is Dermaseptin-A3 of Agalychnis annae (Blue-sided leaf frog).